Reading from the N-terminus, the 182-residue chain is Transmembrane protein 11 homolog, mitochondrial (182 aa).

Phosphoserine is present on S25. The next 2 membrane-spanning stretches (helical) occupy residues 70–89 (TAVA…RDRP) and 91–108 (IAAP…LYTV).

Belongs to the TMEM11 family.

Its subcellular location is the mitochondrion inner membrane. Plays a role in mitochondrial morphogenesis. This is Transmembrane protein 11 homolog, mitochondrial (Pmi) from Drosophila melanogaster (Fruit fly).